Here is a 155-residue protein sequence, read N- to C-terminus: uncharacterized protein (155 aa).

This is an uncharacterized protein from Methanocaldococcus jannaschii (strain ATCC 43067 / DSM 2661 / JAL-1 / JCM 10045 / NBRC 100440) (Methanococcus jannaschii).